A 448-amino-acid polypeptide reads, in one-letter code: Adenylosuccinate synthetase (448 aa).

GTP is bound by residues 22–28 (GDEGKGK) and 50–52 (GHT). Catalysis depends on Asp23, which acts as the Proton acceptor. Asp23 and Gly50 together coordinate Mg(2+). IMP is bound by residues 23–26 (DEGK), 48–51 (NAGH), Thr139, Arg153, Gln234, Thr249, and Arg321. His51 (proton donor) is an active-site residue. 317–323 (SVTGRPR) provides a ligand contact to substrate. GTP is bound by residues Arg323, 349 to 351 (KLD), and 431 to 433 (STG).

It belongs to the adenylosuccinate synthetase family. As to quaternary structure, homodimer. Mg(2+) serves as cofactor.

It localises to the cytoplasm. It catalyses the reaction IMP + L-aspartate + GTP = N(6)-(1,2-dicarboxyethyl)-AMP + GDP + phosphate + 2 H(+). The protein operates within purine metabolism; AMP biosynthesis via de novo pathway; AMP from IMP: step 1/2. Its function is as follows. Plays an important role in the de novo pathway of purine nucleotide biosynthesis. Catalyzes the first committed step in the biosynthesis of AMP from IMP. This is Adenylosuccinate synthetase from Burkholderia mallei (strain NCTC 10247).